The primary structure comprises 370 residues: tRNA (guanine(26)-N(2))-dimethyltransferase (370 aa).

A Trm1 methyltransferase domain is found at 4–368; it reads TWVTEGRTTI…APLEEIRDCI (365 aa). S-adenosyl-L-methionine-binding residues include Arg41, Arg66, Asp82, Asp108, and Ala109. Zn(2+) contacts are provided by Cys237, Cys240, Cys256, and Cys259.

Belongs to the class I-like SAM-binding methyltransferase superfamily. Trm1 family.

The enzyme catalyses guanosine(26) in tRNA + 2 S-adenosyl-L-methionine = N(2)-dimethylguanosine(26) in tRNA + 2 S-adenosyl-L-homocysteine + 2 H(+). Its function is as follows. Dimethylates a single guanine residue at position 26 of a number of tRNAs using S-adenosyl-L-methionine as donor of the methyl groups. The protein is tRNA (guanine(26)-N(2))-dimethyltransferase of Methanospirillum hungatei JF-1 (strain ATCC 27890 / DSM 864 / NBRC 100397 / JF-1).